We begin with the raw amino-acid sequence, 864 residues long: Mitochondrial 15S rRNA processing factor CCM1 (864 aa).

The transit peptide at 1 to 76 (MYMARCGPKN…REFSNTLKER (76 aa)) directs the protein to the mitochondrion. 2 PPR repeats span residues 319–353 (NKQN…STKH) and 356–390 (DICT…NIKP).

Belongs to the CCM1 family. Binds to mitochondrial small subunit 15S rRNA.

The protein resides in the mitochondrion. In terms of biological role, regulates mitochondrial small subunit maturation by controlling 15S rRNA 5'-end processing. Localizes to the 5' precursor of the 15S rRNA in a position that is subsequently occupied by mS47 in the mature yeast mtSSU. Uses structure and sequence-specific RNA recognition, binding to a single-stranded region of the precursor and specifically recognizing bases -6 to -1. The exchange of Ccm1 for mS47 is coupled to the irreversible removal of precursor rRNA that is accompanied by conformational changes of the mitoribosomal proteins uS5m and mS26. These conformational changes signal completion of 5'-end rRNA processing through protection of the mature 5'-end of the 15S rRNA and stabilization of mS47. The removal of the 5' precursor together with the dissociation of Ccm1 may be catalyzed by the 5'-3' exoribonuclease Pet127. Involved in the specific removal of group I introns in mitochondrial encoded transcripts. The chain is Mitochondrial 15S rRNA processing factor CCM1 (CCM1) from Saccharomyces cerevisiae (strain YJM789) (Baker's yeast).